The chain runs to 122 residues: Large ribosomal subunit protein uL14 (122 aa).

Belongs to the universal ribosomal protein uL14 family. As to quaternary structure, part of the 50S ribosomal subunit. Forms a cluster with proteins L3 and L19. In the 70S ribosome, L14 and L19 interact and together make contacts with the 16S rRNA in bridges B5 and B8.

Binds to 23S rRNA. Forms part of two intersubunit bridges in the 70S ribosome. The polypeptide is Large ribosomal subunit protein uL14 (Paenarthrobacter aurescens (strain TC1)).